Here is a 205-residue protein sequence, read N- to C-terminus: Inosine triphosphate pyrophosphatase (205 aa).

20-25 is a binding site for ITP; the sequence is TGNAKK. Glu-48 lines the Mg(2+) pocket. ITP contacts are provided by residues Lys-60, 76 to 77, Lys-93, 152 to 155, Lys-175, and 180 to 181; these read DT, FGWD, and HR.

The protein belongs to the HAM1 NTPase family. In terms of assembly, homodimer. The cofactor is Mg(2+). Requires Mn(2+) as cofactor.

Its subcellular location is the cytoplasm. The catalysed reaction is ITP + H2O = IMP + diphosphate + H(+). It catalyses the reaction dITP + H2O = dIMP + diphosphate + H(+). The enzyme catalyses XTP + H2O = XMP + diphosphate + H(+). Pyrophosphatase that hydrolyzes non-canonical purine nucleotides such as inosine triphosphate (ITP), deoxyinosine triphosphate (dITP) or xanthosine 5'-triphosphate (XTP) to their respective monophosphate derivatives. The enzyme does not distinguish between the deoxy- and ribose forms. Probably excludes non-canonical purines from RNA and DNA precursor pools, thus preventing their incorporation into RNA and DNA and avoiding chromosomal lesions. The protein is Inosine triphosphate pyrophosphatase of Oryza sativa subsp. japonica (Rice).